The primary structure comprises 456 residues: Putrescine--pyruvate aminotransferase (456 aa).

Tyr156 contacts substrate. Asp262 lines the pyridoxal 5'-phosphate pocket. N6-(pyridoxal phosphate)lysine is present on Lys291. The substrate site is built by Gly322 and Arg417.

This sequence belongs to the class-III pyridoxal-phosphate-dependent aminotransferase family. Pyridoxal 5'-phosphate serves as cofactor.

It carries out the reaction putrescine + pyruvate = 4-aminobutanal + L-alanine. It participates in amine and polyamine degradation; putrescine degradation; 4-aminobutanal from putrescine (transaminase route). Involved in the putrescine catabolism. Catalyzes the transfer of the amino group from putrescine to pyruvate to yield 4-aminobutanal and alanine. This chain is Putrescine--pyruvate aminotransferase, found in Pseudomonas aeruginosa (strain ATCC 15692 / DSM 22644 / CIP 104116 / JCM 14847 / LMG 12228 / 1C / PRS 101 / PAO1).